A 793-amino-acid chain; its full sequence is Pleckstrin homology domain-containing family H member 3 (793 aa).

The signal sequence occupies residues 1-18; that stretch reads MPLPGGLWWLLCCRRGFT. The tract at residues 28–62 is disordered; the sequence is ELSGDGDEDEDEETFELRTPSPAGGGRGPLEVTLT. Acidic residues predominate over residues 29–41; sequence LSGDGDEDEDEET. At Ser30 the chain carries Phosphoserine. The 105-residue stretch at 95 to 199 folds into the PH domain; the sequence is DIVVKGWLYR…WGVALREVIA (105 aa). The region spanning 237–399 is the MyTH4 domain; it reads HTSGALYAPL…PSLAEISALS (163 aa). Residues 404–754 form the FERM domain; the sequence is LLCTVHCPGA…AYLANPSPER (351 aa). Disordered stretches follow at residues 554-586 and 598-622; these read VPLP…SAAL and KRRA…EGGG. The span at 598–608 shows a compositional bias: basic residues; sequence KRRAERARRGG. 2 positions are modified to omega-N-methylarginine: Arg638 and Arg642. Residues 750–762 show a composition bias toward low complexity; it reads PSPERPCSSSSPP. Residues 750-793 form a disordered region; the sequence is PSPERPCSSSSPPCQDLPDTSPPSQRPGLDEPQGQSGCLGQLQD. Residues 782-793 are compositionally biased toward polar residues; that stretch reads QGQSGCLGQLQD.

This is Pleckstrin homology domain-containing family H member 3 (PLEKHH3) from Homo sapiens (Human).